Reading from the N-terminus, the 698-residue chain is MSQEKKVFKTEWAGRSLTIETGQLAKQANGAVLVRYGDTVVLSTATASKEPRDGDFFPLTVNYEEKMYAAGKIPGGFKKREGRPGDDATLTARLIDRPIRPLFPKGYKHDVQIMNMVLSADPDCSPQMAAMIGSSMALSVSDIPFQGPIAGVNVGYIDGKYIINPTVEEKEVSRLDLEVAGHKDAVNMVEAGASEITEQEMLEAIFFGHEEIQRLVDFQQQIVDHIQPVKQEFIPVERDEALVERVKSLTEEKGLKETVLTFDKQQRDENLDNLKEEIVNEFIDEEDPENELLIKEVYAILNELVKEEVRRLIADEKIRPDGRKPDEIRPLDSEVGILPRTHGSGLFTRGQTQALSVLTLGALGDYQLIDGLGPEEEKRFMHHYNFPNFSVGETGPVRAPGRREIGHGALGERALKYIIPDTADFPYTIRIVSEVLESNGSSSQASICGSTLALMDAGVPIKAPVAGIAMGLVTREDSYTILTDIQGMEDALGDMDFKVAGTKEGITAIQMDIKIDGLTREIIEEALEQARRGRLEIMNHMLQTIDQPRTELSAYAPKVVTMTIKPDKIRDVIGPGGKKINEIIDETGVKLDIEQDGTIFIGAVDQAMINRAREIIEEITREAEVGQTYQATVKRIEKYGAFVGLFPGKDALLHISQISKNRIEKVEDVLKIGDTIEVKITEIDKQGRVNASHRALEE.

Mg(2+)-binding residues include D490 and D496. One can recognise a KH domain in the interval 557 to 616; that stretch reads PKVVTMTIKPDKIRDVIGPGGKKINEIIDETGVKLDIEQDGTIFIGAVDQAMINRAREII. The S1 motif domain maps to 626 to 694; that stretch reads GQTYQATVKR…KQGRVNASHR (69 aa).

This sequence belongs to the polyribonucleotide nucleotidyltransferase family. Mg(2+) serves as cofactor.

It localises to the cytoplasm. The enzyme catalyses RNA(n+1) + phosphate = RNA(n) + a ribonucleoside 5'-diphosphate. Involved in mRNA degradation. Catalyzes the phosphorolysis of single-stranded polyribonucleotides processively in the 3'- to 5'-direction. In Staphylococcus aureus (strain MSSA476), this protein is Polyribonucleotide nucleotidyltransferase.